The sequence spans 389 residues: Lipid-A-disaccharide synthase (389 aa).

It belongs to the LpxB family.

It catalyses the reaction a lipid X + a UDP-2-N,3-O-bis[(3R)-3-hydroxyacyl]-alpha-D-glucosamine = a lipid A disaccharide + UDP + H(+). It participates in bacterial outer membrane biogenesis; LPS lipid A biosynthesis. Its function is as follows. Condensation of UDP-2,3-diacylglucosamine and 2,3-diacylglucosamine-1-phosphate to form lipid A disaccharide, a precursor of lipid A, a phosphorylated glycolipid that anchors the lipopolysaccharide to the outer membrane of the cell. This is Lipid-A-disaccharide synthase from Paraburkholderia phytofirmans (strain DSM 17436 / LMG 22146 / PsJN) (Burkholderia phytofirmans).